Consider the following 397-residue polypeptide: Acetate kinase 2 (397 aa).

Residue asparagine 10 coordinates Mg(2+). Residue lysine 17 participates in ATP binding. Arginine 90 is a substrate binding site. Residue aspartate 147 is the Proton donor/acceptor of the active site. ATP is bound by residues 207–211, 281–283, and 329–333; these read HLGNG, DAR, and GIGEN. Residue glutamate 385 coordinates Mg(2+).

It belongs to the acetokinase family. In terms of assembly, homodimer. Requires Mg(2+) as cofactor. The cofactor is Mn(2+).

Its subcellular location is the cytoplasm. It catalyses the reaction acetate + ATP = acetyl phosphate + ADP. It functions in the pathway metabolic intermediate biosynthesis; acetyl-CoA biosynthesis; acetyl-CoA from acetate: step 1/2. In terms of biological role, catalyzes the formation of acetyl phosphate from acetate and ATP. Can also catalyze the reverse reaction. The protein is Acetate kinase 2 of Aliivibrio fischeri (strain ATCC 700601 / ES114) (Vibrio fischeri).